The following is a 171-amino-acid chain: N5-carboxyaminoimidazole ribonucleotide mutase (171 aa).

Residues Ser10, Asp13, and Arg40 each contribute to the substrate site.

The protein belongs to the AIR carboxylase family. Class I subfamily.

The catalysed reaction is 5-carboxyamino-1-(5-phospho-D-ribosyl)imidazole + H(+) = 5-amino-1-(5-phospho-D-ribosyl)imidazole-4-carboxylate. It functions in the pathway purine metabolism; IMP biosynthesis via de novo pathway; 5-amino-1-(5-phospho-D-ribosyl)imidazole-4-carboxylate from 5-amino-1-(5-phospho-D-ribosyl)imidazole (N5-CAIR route): step 2/2. In terms of biological role, catalyzes the conversion of N5-carboxyaminoimidazole ribonucleotide (N5-CAIR) to 4-carboxy-5-aminoimidazole ribonucleotide (CAIR). The chain is N5-carboxyaminoimidazole ribonucleotide mutase from Thermotoga maritima (strain ATCC 43589 / DSM 3109 / JCM 10099 / NBRC 100826 / MSB8).